A 606-amino-acid chain; its full sequence is Gamma-aminobutyric acid receptor subunit beta (606 aa).

The first 44 residues, 1 to 44 (MSDSKMDKLARMAPLPRTPLLTIWLAINMALIAQETGHKRIHTV), serve as a signal peptide directing secretion. Residues 45-268 (QAATGGGSML…CEIQFVRSMG (224 aa)) lie on the Extracellular side of the membrane. An N-linked (GlcNAc...) asparagine glycan is attached at N58. A disulfide bridge connects residues C185 and C199. An N-linked (GlcNAc...) asparagine glycan is attached at N253. The next 3 membrane-spanning stretches (helical) occupy residues 269-291 (YYLI…SFWL), 297-316 (PARV…LMSS), and 333-356 (YLGT…YMAK). At 357–568 (RIQMRKQRFM…LGITPSDIDK (212 aa)) the chain is on the cytoplasmic side. Disordered regions lie at residues 376–451 (KQQL…VSNR) and 482–542 (HDPK…AAVP). Low complexity predominate over residues 381-395 (GANQQQANPNPNANV). A compositionally biased stretch (gly residues) spans 396 to 425 (GGPGGVGVGPGGPGGPGGGVNVGVGMGMGP). A compositionally biased stretch (basic residues) spans 430-443 (GHGHHAHSHGHPHA). A compositionally biased stretch (gly residues) spans 499–536 (GGRGGPQSHGPGPGQGGGPPGGGGGGGGGGGPPEGGGD). A helical transmembrane segment spans residues 569–590 (YSRIVFPVCFVCFNLMYWIIYL).

It belongs to the ligand-gated ion channel (TC 1.A.9) family. Gamma-aminobutyric acid receptor (TC 1.A.9.5) subfamily. Forms oligomers. Interacts with Nlg4; the interaction mediates Rdl clustering. Interacts with Fbxl4; the interaction mediates Rdl degradation. Expressed in different parts of the brain: the mushroom bodies (alpha, alpha', beta, beta', gamma lobes and peduncles), the neurons projecting to the columnar-type neuron LC9 optic glomerulus, in interneurons connecting the paired olfactory lobes, antennal lobes, PDF-expressing small and large ventral lateral neurons (LNvs) of the circadian clock and lobula columnar neuron 11 (LC11) (at protein level). Expressed in all major ON pathway medulla neurons (Mi1, Tm3, Mi4, and Mi9) and in OFF pathway neurons (Tm1, Tm2, Tm4, and Tm9).

It localises to the cell membrane. Its subcellular location is the postsynaptic cell membrane. It is found in the cell projection. The protein localises to the dendrite. The protein resides in the axon. Its activity is regulated as follows. Activated by agonist muscimol. Insensitive to zinc, glycine, glutamate, and baclofen, loreclezole, to antagonist bicuculline, glycine-receptor antagonist strychnine, and nonselective GABA and glycine antagonist RU 5135. Insensitive to flunitrazepam, pentobarbitone or pregnane steroids such as 5alpha-pregnan-3alpha-ol-20-one. Inhibited by insecticides picrotoxin (PTX), cyclodiene dieldrin, TBPS and lindane. Inhibited by ivermectin, fipronil and pyrafluprole. With respect to regulation, inhibited by insecticides picrotoxin (PTX). Its function is as follows. Gamma-aminobutyric acid (GABA) receptor voltage channel subunit. GABA, an inhibitory neurotransmitter, mediates neuronal inhibition by binding to the GABA receptor and opening an integral chloride channel. Together with glutamate receptor GluClalpha, plays an important role in the visual response by regulating the activity of ON/OFF-selective neurons. Plays a role in promoting sleep and sleep latency by regulating the activity of peptidergic PDF neurons. In large ventral lateral clock neurons, clustering is mediated by Nlg4 and protein levels undergo daily degradation in response to the circadian clock. In neurons in the mushroom bodies, has a role in odor memory acquisition where it inhibits appetitive and aversive olfactory learning, probably upstream of Adcy1/adenylate cyclase 1 and GTPase activating protein Nf1. In male-specific GABAergic neurons, plays a role in inhibiting male aggressive behavior during courtship. Gamma-aminobutyric acid (GABA) receptor voltage channel subunit. This chain is Gamma-aminobutyric acid receptor subunit beta (Rdl), found in Drosophila melanogaster (Fruit fly).